Reading from the N-terminus, the 1003-residue chain is Cytosolic carboxypeptidase 3 (1003 aa).

Residues 1 to 23 (MSEDSEKEDYSDRTISDEDESDE) form a disordered region. In terms of domain architecture, Peptidase M14 spans 299-570 (YPYTYTNLQE…HFCDSLLDYC (272 aa)). Zn(2+) contacts are provided by His-364, Glu-367, and His-460. The active-site Proton donor/acceptor is Glu-534. 2 disordered regions span residues 642–662 (KQLK…NIRE) and 911–1003 (KSSE…QRDT). A compositionally biased stretch (basic and acidic residues) spans 649–662 (ERNSTIERHQNIRE). Positions 922 to 934 (PKKRRKYSRVKAT) are enriched in basic residues. Residues 963 to 976 (AEGSSQQGTMQTAP) are compositionally biased toward polar residues.

This sequence belongs to the peptidase M14 family. Zn(2+) is required as a cofactor.

The protein resides in the cytoplasm. The protein localises to the cytosol. It catalyses the reaction (L-glutamyl)(n+1)-gamma-L-glutamyl-L-glutamyl-[protein] + H2O = (L-glutamyl)(n)-gamma-L-glutamyl-L-glutamyl-[protein] + L-glutamate. Its function is as follows. Metallocarboxypeptidase that mediates deglutamylation of tubulin and non-tubulin target proteins. Catalyzes the removal of polyglutamate side chains present on the gamma-carboxyl group of glutamate residues within the C-terminal tail of tubulin protein. Specifically cleaves tubulin long-side-chains, while it is not able to remove the branching point glutamate. Also catalyzes the removal of polyglutamate residues from the carboxy-terminus of non-tubulin proteins such as MYLK. May catalyze the hydrolysis of aspartate from the carboxy-terminus of target proteins. Does not show detyrosinase or deglycylase activities from the carboxy-terminus of target proteins. This Bos taurus (Bovine) protein is Cytosolic carboxypeptidase 3 (AGBL3).